The sequence spans 216 residues: Nucleolar protein 12 (216 aa).

Residues 33 to 97 are a coiled coil; that stretch reads GFHKRKVERK…LVTAKTESVQ (65 aa). Residues 120–216 form a disordered region; it reads LLGLPLPEQG…MTGKARHNGE (97 aa). The segment covering 129-140 has biased composition (acidic residues); it reads GDQDGSQEEEVS. Basic residues-rich tracts occupy residues 171–183 and 200–216; these read AHSR…KHPR and KTQR…HNGE.

Belongs to the RRP17 family. In terms of assembly, interacts with KIAA1191.

It localises to the nucleus. It is found in the nucleolus. The protein localises to the cytoplasm. Functionally, multifunctional RNA binding protein that plays a role in RNA metabolism and DNA maintenance. Participates in the resolution of DNA stress and the maintenance of genome integrity by localizing to sites of DNA insults. Also plays a role in proper nucleolar organization by limiting nucleolar size and regulating nucleolar number. Mechanistically, regulates the nucleolar levels of fibrillarin and nucleolin, two key players in pre-rRNA processing and ribosome assembly. This chain is Nucleolar protein 12 (Nol12), found in Rattus norvegicus (Rat).